Here is a 583-residue protein sequence, read N- to C-terminus: 2-succinyl-5-enolpyruvyl-6-hydroxy-3-cyclohexene-1-carboxylate synthase (583 aa).

The protein belongs to the TPP enzyme family. MenD subfamily. In terms of assembly, homodimer. Mg(2+) serves as cofactor. Mn(2+) is required as a cofactor. It depends on thiamine diphosphate as a cofactor.

The enzyme catalyses isochorismate + 2-oxoglutarate + H(+) = 5-enolpyruvoyl-6-hydroxy-2-succinyl-cyclohex-3-ene-1-carboxylate + CO2. It participates in quinol/quinone metabolism; 1,4-dihydroxy-2-naphthoate biosynthesis; 1,4-dihydroxy-2-naphthoate from chorismate: step 2/7. The protein operates within cofactor biosynthesis; phylloquinone biosynthesis. Functionally, catalyzes the thiamine diphosphate-dependent decarboxylation of 2-oxoglutarate and the subsequent addition of the resulting succinic semialdehyde-thiamine pyrophosphate anion to isochorismate to yield 2-succinyl-5-enolpyruvyl-6-hydroxy-3-cyclohexene-1-carboxylate (SEPHCHC). This chain is 2-succinyl-5-enolpyruvyl-6-hydroxy-3-cyclohexene-1-carboxylate synthase, found in Nostoc sp. (strain PCC 7120 / SAG 25.82 / UTEX 2576).